The sequence spans 282 residues: 5'-nucleotidase SurE (282 aa).

A divalent metal cation contacts are provided by D12, D13, S43, and N98.

Belongs to the SurE nucleotidase family. It depends on a divalent metal cation as a cofactor.

The protein localises to the cytoplasm. The enzyme catalyses a ribonucleoside 5'-phosphate + H2O = a ribonucleoside + phosphate. Nucleotidase that shows phosphatase activity on nucleoside 5'-monophosphates. The sequence is that of 5'-nucleotidase SurE from Hyperthermus butylicus (strain DSM 5456 / JCM 9403 / PLM1-5).